Consider the following 417-residue polypeptide: V-set and immunoglobulin domain-containing protein 8 (417 aa).

A signal peptide spans 1 to 21; the sequence is MGVRGALHLLLVCLSPALLSA. 2 Ig-like V-type domains span residues 22 to 140 and 145 to 256; these read VRIN…VIVT and PAVP…VKVS. Residues 22-262 lie on the Extracellular side of the membrane; the sequence is VRINGDGQEV…VKVSDSQRVG (241 aa). Intrachain disulfides connect C44-C125 and C166-C238. The helical transmembrane segment at 263-283 threads the bilayer; sequence MIVGAVLGSLLMLACLALGIW. The Cytoplasmic portion of the chain corresponds to 284–417; sequence GLICCCCGGG…QRSCKDGLLV (134 aa).

It localises to the membrane. This Mus musculus (Mouse) protein is V-set and immunoglobulin domain-containing protein 8 (Vsig8).